The primary structure comprises 249 residues: Indole-3-glycerol phosphate synthase (249 aa).

The protein belongs to the TrpC family.

The catalysed reaction is 1-(2-carboxyphenylamino)-1-deoxy-D-ribulose 5-phosphate + H(+) = (1S,2R)-1-C-(indol-3-yl)glycerol 3-phosphate + CO2 + H2O. The protein operates within amino-acid biosynthesis; L-tryptophan biosynthesis; L-tryptophan from chorismate: step 4/5. The protein is Indole-3-glycerol phosphate synthase of Pyrobaculum neutrophilum (strain DSM 2338 / JCM 9278 / NBRC 100436 / V24Sta) (Thermoproteus neutrophilus).